Consider the following 627-residue polypeptide: MSRPGQGVMVPVNGLGFPPQNVARVVVWEWLNEHSRWRPYTATVCHHIENVLKEDARGSVVLGQVDAQLVPYIIDLQSMHQFRQDTGTMRPVRRNFYDPSSAPGKGIVWEWENDGGAWTAYDMDICITIQNAYEKQHPWLDLSSLGFCYLIYFNSMSQMNRQTRRRRRLRRRLDLAYPLTVGSIPKSQSWPVGASSGQPCSCQQCLLVNSTRAASNAILASQRRKAPIAPAAPPAPPPPPPPLPPGGPPGALVVRPSATFAGAALWAAPATGPTEPAPPPGVPPRSPSAPNGAPTPGQNNLSRPGPQRSTSVSARASIPPGVPALPVKNLNGTGPVHPALAGMTGILLCAAGLPVCLTRAPKPILHPPPVSKSDVKPVPGVPGVCRKTKKKHLKKSKNPEDVVRRYMQKVKNPPDEDCTICMERLVTASGYEGVLRNKSVRPELVGRLGRCGHMYHLLCLVAMYSNGNKDGSLQCPTCKAIYGEKTGTQPPGKMEFHLIPHSLPGFADTQTIRIVYDIPTGIQGPEHPNPGKKFTARGFPRHCYLPNNEKGRKVLRLLITAWERRLIFTIGTSNTTGESDTVVWNEIHHKTEFGSNLTGHGYPDASYLDNVLAELTAQGVSEAMAKA.

2 WWE domains span residues 14-94 (GLGF…PVRR) and 95-171 (NFYD…RLRR). Disordered regions lie at residues 222–254 (QRRKAPIAPAAPPAPPPPPPPLPPGGPPGALVV), 269–327 (PATG…ALPV), and 368–398 (PPVSKSDVKPVPGVPGVCRKTKKKHLKKSKN). Pro residues-rich tracts occupy residues 230–248 (PAAPPAPPPPPPPLPPGGP) and 275–287 (EPAPPPGVPPRSP). The SH3-binding motif lies at 240 to 243 (PPPL). A compositionally biased stretch (polar residues) spans 296–314 (PGQNNLSRPGPQRSTSVSA). Residues 386 to 396 (RKTKKKHLKKS) are compositionally biased toward basic residues. Residues 418–479 (CTICMERLVT…DGSLQCPTCK (62 aa)) form an RING-type zinc finger.

This sequence belongs to the Deltex family. In terms of assembly, homodimer. May form a heterodimer with other members of the Deltex family. Interacts with NOTCH1 via its N-terminal region and EIF3F, the interaction is required for NOTCH1 deubiquitination. Interacts with EP300. Forms a heterodimer with BBAP; the heterodimerization leading to an increase of in vitro ubiquitin ligase activity. Interacts with ITCH. Post-translationally, ubiquitinated; undergoes 'Lys-29'-linked polyubiquitination catalyzed by ITCH. Predominantly expressed in the brain and testis. Weakly expressed in the thymus, spleen and ovary. Predominantly expressed in regions containing post-mitotic differentiating neurons.

The protein localises to the cytoplasm. Its subcellular location is the nucleus. It catalyses the reaction S-ubiquitinyl-[E2 ubiquitin-conjugating enzyme]-L-cysteine + [acceptor protein]-L-lysine = [E2 ubiquitin-conjugating enzyme]-L-cysteine + N(6)-ubiquitinyl-[acceptor protein]-L-lysine.. It participates in protein modification; protein ubiquitination. Functionally, regulator of Notch signaling, a signaling pathway involved in cell-cell communications that regulates a broad spectrum of cell-fate determinations. Mainly acts as a positive regulator of Notch, but it also acts as a negative regulator, depending on the developmental and cell context. Mediates the antineural activity of Notch, possibly by inhibiting the transcriptional activation mediated by MATCH1. Involved in neurogenesis, lymphogenesis and myogenesis, and may also be involved in MZB (Marginal zone B) cell differentiation. Promotes B-cell development at the expense of T-cell development, suggesting that it can antagonize NOTCH1. Functions as an ubiquitin ligase protein in vivo, mediating ubiquitination and promoting degradation of MEKK1, suggesting that it may regulate the Notch pathway via some ubiquitin ligase activity. The chain is E3 ubiquitin-protein ligase DTX1 (Dtx1) from Mus musculus (Mouse).